We begin with the raw amino-acid sequence, 145 residues long: Inner membrane protein YiaA (145 aa).

Residues 1-12 are Cytoplasmic-facing; sequence MDNKISTYSPAF. Residues 13-32 traverse the membrane as a helical segment; it reads SIVSWIALVGGIVTYLLGLW. At 33–41 the chain is on the periplasmic side; sequence NAEMQLNEK. Residues 42 to 59 form a helical membrane-spanning segment; that stretch reads GYYFAVLVLGLFSAASYQ. Over 60–71 the chain is Cytoplasmic; it reads KTVRDKYEGIPT. The helical transmembrane segment at 72 to 94 threads the bilayer; the sequence is TSIYYMTCLTVFIISVALLMVGL. Residues 95-98 are Periplasmic-facing; it reads WNAT. A helical membrane pass occupies residues 99–121; that stretch reads LLLSEKGFYGLAFFLSLFGAVAV. At 122-145 the chain is on the cytoplasmic side; it reads QKNIRDAGINPPKETQVTQEEYSE.

It is found in the cell inner membrane. This Escherichia coli (strain K12) protein is Inner membrane protein YiaA (yiaA).